A 1434-amino-acid chain; its full sequence is MDQEVMDFFDFSKELKRVAAAPQGYISSDPRLMATKFKSSEVPNRELIGTDYVSKIVAKEKCLLNGTLLNEQPQGKRIRTLDDLDTDDEGEETEIRRDDEYYKKFRFNLNRDKNLSIYAKREEILAAINAHPVVIIKGETGCGKTTQVPQYILDEAYKSGKYCNIVVTQPRRIAAISIANRVCQEREWQQNTVCSFQVGLHRPNSLEDTRLLYCTTGVLLNNLINNKTLTHYTHIVLDEVHERDQNMDFLLIVVRRLLATNSRHVKIILMSATIDAKELSDYFTTTNSIPPVITTNHRRKHSIEKFYRDQLGSIIWNEEDVGHQQVPEINKHGYRAAVKIIVIIDNMERKAAIQSRQSYDEALRYGAVLIFLPGIYEIDTMAENLTCMLENDPNIKVSIVRCFSLMTPENQRDVFNPPPPGFRKIILTTNIAESSITVPDVSYVIDFCLAKVKVTDTASSFSSLRLTWASKANCRQRAGRVGRLRSGRVYRMVNKHFYQREMPEFGIPEMLRLPLQNSVLKAKVLNMGSPVEILALALSPPNLSDIHNTILLLKEVGALYLTVDGIYDPLDGDLTYWGTIMSRLPLDTRQSRLIILGYIFNMLEEAIIIAAGLSTPGLFAHEGGRSQLGDSFWMHYIFSDGSGSDLVAIWRVYLTYLNIVENGHDQESAIRWAKRFHVSLRSLKEIHLLVQELRVRCTHLGLIPFPVNPNQMMDDREKAIMLKVIIAGAFYPNYFTRSKESCADTDRNIYQTISGHDPCRTVYFTNFKPAYMGELYTRRIKELFQEVRIPPENMDVTFQEGSQKVFVTFKQDDWIEGSSKYVPVSGRVQSEVYKAVMMRQNRVERPIHIMNPSAFMSYVQQRGIGDVIEGRWIPPTKPLNVELLALPSVFDKTISGSITCIVNCGKFFFQPQSFEECIRNMSEIFNAPQQLRNYVTNASAIAKGMMVLAKRDSYFQRATVIRPENQSNRQPMFYVRFIDYGNCTLLPMQLMRLMPRELTEQYGDLPPRVFECRLAMVQPSSVVSGNNRWSTAANDMLKTVAQCGLIDIEVYSLFNNVAAVLIHMRDGIINDKLVELMLCRRSDEDYMSRKDHDFRLRRQESARNLSTAQRQQINEEYLRSCQLPQDHDLPPPPLEKCKTVVMLKGPNSPLECTMRSITRVGLSKRVNIDHLSVNALLLDADPQDHHDHLIVAHEIAESRNGQTLTARGTTLMPNVQGFGALMVMLFSPTMQLKCNKEGTSYVSVLGGLGCDPDTNEPYFAEHDVLINLDVNILEDDVILINQIRYYIDSVFFNFKEENNPAVSVNERVSIYTQLRSLINRLLCKDRRYIERNMSNADFEWETNPELPLPNEPFGKRAIFPMHSLTELQEEDTGRLVQLRENCSMLHKWRNFEGTLPHMTCKLCNQLLESVPQLRLHLLTILHRDREKQIDYCNQ.

One can recognise a Helicase ATP-binding domain in the interval 125–292 (LAAINAHPVV…FTTTNSIPPV (168 aa)). 138–145 (GETGCGKT) contacts ATP. The short motif at 238–241 (DEVH) is the DEAH box element. Residues 354–526 (QSRQSYDEAL…NSVLKAKVLN (173 aa)) form the Helicase C-terminal domain. The 64-residue stretch at 938-1001 (ASAIAKGMMV…RLMPRELTEQ (64 aa)) folds into the Tudor domain.

The protein belongs to the DEAD box helicase family. DEAH subfamily.

The protein resides in the cytoplasm. It is found in the perinuclear region. Its subcellular location is the cytoplasmic ribonucleoprotein granule. It carries out the reaction ATP + H2O = ADP + phosphate + H(+). Functionally, probable ATP-binding RNA helicase which plays a central role during spermatogenesis and oogenesis by repressing transposable elements and preventing their mobilization, which is essential for the germline integrity. Acts via the piRNA metabolic process, which mediates the repression of transposable elements during meiosis by forming complexes composed of piRNAs and Piwi and govern the methylation and subsequent repression of transposons. Involved in the repression of LTR retrotransposon copia. Also involved in telomere regulation by repressing specialized telomeric retroelements HeT-A, TAHRE, and TART; Drosophila telomeres being maintained by transposition of specialized telomeric retroelements. Involved in telomeric trans-silencing, a repression mechanism by which a transposon or a transgene inserted in subtelomeric heterochromatin has the capacity to repress in trans in the female germline, a homologous transposon, or transgene located in euchromatin. Involved in the repression of testis-expressed Stellate genes by the homologous Su(Ste) repeats. Required for anteroposterior and dorsoventral axis formation during oogenesis. Key component of the perinuclear meiotic nuage, an electron dense structure involved in the post-transcriptional regulation of transposons and mRNAs; required for recruitment of other nuage comonents including vas, krimp, aub and mael. May have a role in production of piwi-interacting RNA (piRNA). The sequence is that of Probable ATP-dependent RNA helicase spindle-E from Drosophila melanogaster (Fruit fly).